A 370-amino-acid chain; its full sequence is Fe(2+) transport protein 2 (370 aa).

An N-terminal signal peptide occupies residues 1 to 25; it reads MMMSSSQTPVRIAFVFLVILAATDA. Topologically, residues 26 to 55 are extracellular; it reads HSDHRTPPPACGGAAVGGECHSVARALRLK. A helical transmembrane segment spans residues 56–76; it reads LIAIPAILAASVAGVCLPLFA. Over 77-85 the chain is Cytoplasmic; it reads RSVPALRPD. A helical transmembrane segment spans residues 86–106; the sequence is GGLFAVVKAFASGVILGTGYM. Topologically, residues 107 to 130 are extracellular; it reads HVLPDSFNDLTSPCLPRKPWSEFP. Residues 131–151 form a helical membrane-spanning segment; sequence FAAFVAMLAAVFTLMVDSLML. The Cytoplasmic segment spans residues 152–215; it reads TFHTRGSKGR…TTKAQLLRNR (64 aa). The helical transmembrane segment at 216 to 236 threads the bilayer; that stretch reads VIVQVLEMGIVVHSVVIGLGM. Residues 237–247 are Extracellular-facing; sequence GASQNVCTIRP. Residues 248-268 traverse the membrane as a helical segment; that stretch reads LVAALCFHQMFEGMGLGGCIL. Residues 269 to 278 are Cytoplasmic-facing; sequence QAGYGGRTRS. The chain crosses the membrane as a helical span at residues 279-299; that stretch reads ALVFFFSTTTPFGIALGLALT. At 300-309 the chain is on the extracellular side; sequence RVYSDSSPTA. A helical transmembrane segment spans residues 310–330; that stretch reads LVVVGLLNAASAGLLHYMALV. Residues 331-349 lie on the Cytoplasmic side of the membrane; it reads ELLAADFMGPKLQGNVRLQ. Residues 350 to 370 traverse the membrane as a helical segment; sequence LAASLAILLGAGGMSVMAKWA.

This sequence belongs to the ZIP transporter (TC 2.A.5) family.

The protein resides in the cell membrane. Functionally, iron transporter that may play a role in the uptake of iron from the rhizosphere across the plasma membrane in the root epidermal layer. The sequence is that of Fe(2+) transport protein 2 (IRT2) from Oryza sativa subsp. japonica (Rice).